Consider the following 142-residue polypeptide: Transcriptional regulator MraZ (142 aa).

SpoVT-AbrB domains are found at residues 5–51 (ASSL…PRPE) and 77–120 (AMDV…DKAT).

Belongs to the MraZ family. As to quaternary structure, forms oligomers.

It is found in the cytoplasm. It localises to the nucleoid. The protein is Transcriptional regulator MraZ of Acidovorax ebreus (strain TPSY) (Diaphorobacter sp. (strain TPSY)).